We begin with the raw amino-acid sequence, 95 residues long: Cell division topological specificity factor (95 aa).

This sequence belongs to the MinE family.

Functionally, prevents the cell division inhibition by proteins MinC and MinD at internal division sites while permitting inhibition at polar sites. This ensures cell division at the proper site by restricting the formation of a division septum at the midpoint of the long axis of the cell. The sequence is that of Cell division topological specificity factor from Microcystis aeruginosa (strain NIES-843 / IAM M-2473).